Here is an 82-residue protein sequence, read N- to C-terminus: DNA-directed RNA polymerase subunit omega (82 aa).

It belongs to the RNA polymerase subunit omega family. In terms of assembly, in cyanobacteria the RNAP catalytic core is composed of 2 alpha, 1 beta, 1 beta', 1 gamma and 1 omega subunit. When a sigma factor is associated with the core the holoenzyme is formed, which can initiate transcription.

The catalysed reaction is RNA(n) + a ribonucleoside 5'-triphosphate = RNA(n+1) + diphosphate. Promotes RNA polymerase assembly. Latches the N- and C-terminal regions of the beta' subunit thereby facilitating its interaction with the beta and alpha subunits. This chain is DNA-directed RNA polymerase subunit omega, found in Synechococcus sp. (strain CC9902).